A 258-amino-acid chain; its full sequence is Tryptophan synthase alpha chain (258 aa).

Catalysis depends on proton acceptor residues Glu50 and Asp61.

It belongs to the TrpA family. Tetramer of two alpha and two beta chains.

It carries out the reaction (1S,2R)-1-C-(indol-3-yl)glycerol 3-phosphate + L-serine = D-glyceraldehyde 3-phosphate + L-tryptophan + H2O. It participates in amino-acid biosynthesis; L-tryptophan biosynthesis; L-tryptophan from chorismate: step 5/5. Functionally, the alpha subunit is responsible for the aldol cleavage of indoleglycerol phosphate to indole and glyceraldehyde 3-phosphate. This chain is Tryptophan synthase alpha chain, found in Clostridium beijerinckii (strain ATCC 51743 / NCIMB 8052) (Clostridium acetobutylicum).